The primary structure comprises 329 residues: Dapdiamide synthesis protein DdaC (329 aa).

It depends on Fe(2+) as a cofactor.

It participates in antibiotic biosynthesis. Functionally, involved in dapdiamide antibiotics biosynthesis. Catalyzes the alpha-ketoglutarate-dependent epoxidation of the covalently bound N-beta-fumaramoyl-DAP-S-DdaD to generate N-beta-epoxysuccinamoyl-DAP in thioester linkage to DdaD. The protein is Dapdiamide synthesis protein DdaC of Enterobacter agglomerans (Erwinia herbicola).